The following is a 500-amino-acid chain: MAIKANEISSLIKKQIENFTPDFEVAETGVVTYVGDGIARAYGLENAMSGELVEFSNGVLGMAQNLDATDVGIIVLGDFLSIREGDTVKRTGKIMEIQVGEELIGRVVNPLGQPVDGLGELNTGKTRPVEAKAPGVMQRKSVSEPLQTGLKAIDALVPIGRGQRELIIGDRQTGKTSVAIDAILNQKGQDMICIYVAIGQKESTVRTQVETLRKLGAMDYTIVVTASASQPSPLLYIAPYAGAAMGEEFMYNGKHVLVVYDDLSKQAVAYRELSLLLRRPPGREAYPGDVFYLHSRLLERAAKLSDDLGGGSMTALPFIETQAGDISAYIATNVISITDGQIFLENDLFYSGVRPAIDAGSSVSRVGGAAQIKAMKKVAGTLRLDLASFRELEAFTQFGSDLDEATQAKLNRGRRTVEVLKQPLHKPLAVEKQVLILYALTHGHLDDVPVDDVLDFETKMFDFFDANYAELLNVITETKDLPEEAKLDEAIKAFKNTTNY.

169–176 (GDRQTGKT) is an ATP binding site.

Belongs to the ATPase alpha/beta chains family. As to quaternary structure, F-type ATPases have 2 components, CF(1) - the catalytic core - and CF(0) - the membrane proton channel. CF(1) has five subunits: alpha(3), beta(3), gamma(1), delta(1), epsilon(1). CF(0) has three main subunits: a(1), b(2) and c(9-12). The alpha and beta chains form an alternating ring which encloses part of the gamma chain. CF(1) is attached to CF(0) by a central stalk formed by the gamma and epsilon chains, while a peripheral stalk is formed by the delta and b chains.

It localises to the cell membrane. The catalysed reaction is ATP + H2O + 4 H(+)(in) = ADP + phosphate + 5 H(+)(out). Its function is as follows. Produces ATP from ADP in the presence of a proton gradient across the membrane. The alpha chain is a regulatory subunit. In Lactococcus lactis subsp. lactis (strain IL1403) (Streptococcus lactis), this protein is ATP synthase subunit alpha.